Reading from the N-terminus, the 233-residue chain is Large ribosomal subunit protein uL3 (233 aa).

Residues 146-171 (GSQRASHGNSRSHRVPGSIGQAQDPG) form a disordered region. Glutamine 168 carries the N5-methylglutamine modification.

Belongs to the universal ribosomal protein uL3 family. In terms of assembly, part of the 50S ribosomal subunit. Forms a cluster with proteins L14 and L19. Methylated by PrmB.

One of the primary rRNA binding proteins, it binds directly near the 3'-end of the 23S rRNA, where it nucleates assembly of the 50S subunit. This chain is Large ribosomal subunit protein uL3, found in Bordetella bronchiseptica (strain ATCC BAA-588 / NCTC 13252 / RB50) (Alcaligenes bronchisepticus).